Here is a 218-residue protein sequence, read N- to C-terminus: Monomethylamine corrinoid protein 2 (218 aa).

A B12-binding N-terminal domain is found at 1-91 (MTNTEIFNKL…ELEKTKVEGE (91 aa)). One can recognise a B12-binding domain in the interval 94-218 (TGLAITFVAE…AAKVALNVMK (125 aa)). Histidine 107 is a methylcob(III)alamin binding site.

It belongs to the methylamine corrinoid protein family. As to quaternary structure, can form a complex with MtmB.

It functions in the pathway one-carbon metabolism; methanogenesis from methylamine. Functionally, acts as a methyl group carrier between MtmB and MtbA. The protein is Monomethylamine corrinoid protein 2 (mtmC2) of Methanosarcina mazei (strain ATCC BAA-159 / DSM 3647 / Goe1 / Go1 / JCM 11833 / OCM 88) (Methanosarcina frisia).